Consider the following 584-residue polypeptide: Zinc finger and BTB domain-containing protein 7A (584 aa).

Residues 34–101 form the BTB domain; it reads CDVVILVEGR…AYTATLTVST (68 aa). Positions 220–313 are disordered; that stretch reads YGPGPPAERP…EDGDGPDVDG (94 aa). The tract at residues 277-584 is mediates interaction with KHDRBS1; that stretch reads EEEAASLSEA…TDGNFTAGLA (308 aa). A compositionally biased stretch (low complexity) spans 281-290; sequence ASLSEAAPEP. A phosphoserine mark is found at S337 and S341. The mediates interaction with RELA stretch occupies residues 349 to 584; the sequence is MDYYLKYFSG…TDGNFTAGLA (236 aa). The segment at 377–584 is mediates interaction with SMAD4; sequence RAKAFQKCPI…TDGNFTAGLA (208 aa). C2H2-type zinc fingers lie at residues 382-404 and 410-432; these read QKCPICEKVIQGAGKLPRHIRTH and YECNICKVRFTRQDKLKVHMRKH. K436 is covalently cross-linked (Glycyl lysine isopeptide (Lys-Gly) (interchain with G-Cter in SUMO2)). The C2H2-type 3 zinc finger occupies 438–460; it reads YLCQQCGAAFAHNYDLKNHMRVH. The C2H2-type 4; atypical zinc-finger motif lies at 466–490; the sequence is YQCDSCCKTFVRSDHLHRHLKKDGC. The interval 486-584 is disordered; sequence KKDGCNGVPS…TDGNFTAGLA (99 aa). The segment covering 505-527 has biased composition (low complexity); that stretch reads GGAPDPSPGATATPGAPAQPSSP. Phosphoserine occurs at positions 511, 525, and 526. The segment covering 528 to 540 has biased composition (basic and acidic residues); sequence DARRNGQEKHFKD. Residue K539 forms a Glycyl lysine isopeptide (Lys-Gly) (interchain with G-Cter in SUMO2) linkage. S549 carries the phosphoserine modification. Gly residues predominate over residues 560–572; that stretch reads GAGGGGDSGGGPG.

Homodimer. Interacts with BCL6. Interacts with RELA; involved in the control by RELA of the accessibility of target gene promoters. Interacts with AR (via NR LBD domain); the interaction is direct and androgen-dependent. Interacts with NCOR1. Interacts with NCOR2. Interacts with SMAD4; the interaction is direct and stimulated by TGFB1. Interacts with HDAC1. Interacts with SP1; ZBTB7A prevents the binding to GC-rich motifs in promoters and represses the transcriptional activity of SP1. Interacts with the DNA-dependent protein kinase complex/DNA-PKc. Interacts with KHDRBS1; negatively regulates KHDRBS1 splicing activity. Post-translationally, sumoylated. Undergoes sumoylation with SUMO1 that may regulate its transcriptional activity. Widely expressed. In normal thymus, expressed in medullary epithelial cells and Hassle's corpuscles (at protein level). In tonsil, expressed in squamous epithelium and germinal center lymphocytes (at protein level). Up-regulated in a subset of lymphomas, as well as in a subset of breast, lung, colon, prostate and bladder carcinomas (at protein level). Expressed in adipose tissues.

It localises to the nucleus. Transcription factor that represses the transcription of a wide range of genes involved in cell proliferation and differentiation. Directly and specifically binds to the consensus sequence 5'-[GA][CA]GACCCCCCCCC-3' and represses transcription both by regulating the organization of chromatin and through the direct recruitment of transcription factors to gene regulatory regions. Negatively regulates SMAD4 transcriptional activity in the TGF-beta signaling pathway through these two mechanisms. That is, recruits the chromatin regulator HDAC1 to the SMAD4-DNA complex and in parallel prevents the recruitment of the transcriptional activators CREBBP and EP300. Collaborates with transcription factors like RELA to modify the accessibility of gene transcription regulatory regions to secondary transcription factors. Also directly interacts with transcription factors like SP1 to prevent their binding to DNA. Functions as an androgen receptor/AR transcriptional corepressor by recruiting NCOR1 and NCOR2 to the androgen response elements/ARE on target genes. Thereby, negatively regulates androgen receptor signaling and androgen-induced cell proliferation. Involved in the switch between fetal and adult globin expression during erythroid cells maturation. Through its interaction with the NuRD complex regulates chromatin at the fetal globin genes to repress their transcription. Specifically represses the transcription of the tumor suppressor ARF isoform from the CDKN2A gene. Efficiently abrogates E2F1-dependent CDKN2A transactivation. Regulates chondrogenesis through the transcriptional repression of specific genes via a mechanism that also requires histone deacetylation. Regulates cell proliferation through the transcriptional regulation of genes involved in glycolysis. Involved in adipogenesis through the regulation of genes involved in adipocyte differentiation. Plays a key role in the differentiation of lymphoid progenitors into B and T lineages. Promotes differentiation towards the B lineage by inhibiting the T-cell instructive Notch signaling pathway through the specific transcriptional repression of Notch downstream target genes. Also regulates osteoclast differentiation. May also play a role, independently of its transcriptional activity, in double-strand break repair via classical non-homologous end joining/cNHEJ. Recruited to double-strand break sites on damage DNA, interacts with the DNA-dependent protein kinase complex and directly regulates its stability and activity in DNA repair. May also modulate the splicing activity of KHDRBS1 toward BCL2L1 in a mechanism which is histone deacetylase-dependent and thereby negatively regulates the pro-apoptotic effect of KHDRBS1. In Homo sapiens (Human), this protein is Zinc finger and BTB domain-containing protein 7A.